The sequence spans 209 residues: Protein GrpE (209 aa).

Residues 1–18 (MKIFNKDGNKNSKEDTKA) are compositionally biased toward basic and acidic residues. The disordered stretch occupies residues 1–60 (MKIFNKDGNKNSKEDTKAGAENSEAQNSGSSAEEVNKARENPEEASASSEAEKSPEVKCQ). Positions 23–33 (SEAQNSGSSAE) are enriched in polar residues. Positions 50-60 (EAEKSPEVKCQ) are enriched in basic and acidic residues.

Belongs to the GrpE family. Homodimer.

It is found in the cytoplasm. Functionally, participates actively in the response to hyperosmotic and heat shock by preventing the aggregation of stress-denatured proteins, in association with DnaK and GrpE. It is the nucleotide exchange factor for DnaK and may function as a thermosensor. Unfolded proteins bind initially to DnaJ; upon interaction with the DnaJ-bound protein, DnaK hydrolyzes its bound ATP, resulting in the formation of a stable complex. GrpE releases ADP from DnaK; ATP binding to DnaK triggers the release of the substrate protein, thus completing the reaction cycle. Several rounds of ATP-dependent interactions between DnaJ, DnaK and GrpE are required for fully efficient folding. The sequence is that of Protein GrpE from Methanosarcina barkeri (strain Fusaro / DSM 804).